The chain runs to 344 residues: C-C chemokine receptor-like 2 (344 aa).

The Extracellular segment spans residues 1 to 43 (MANYTLAPEDEYDVLIEGELESDEAEQCDRYDTWALSAQLVPS). An N-linked (GlcNAc...) asparagine glycan is attached at Asn3. A helical transmembrane segment spans residues 44 to 64 (LCSAVFVVGVLDNLLVVLILV). The Cytoplasmic segment spans residues 65–74 (KYKGLKRVEN). The helical transmembrane segment at 75-95 (IYLLNLAVSNLCFLLTLPFWA) threads the bilayer. Residues 96-104 (HAGGDPMCK) lie on the Extracellular side of the membrane. Cys103 and Cys181 are oxidised to a cystine. Residues 105–125 (ILIGLYFVGLYSETFFNCLLT) form a helical membrane-spanning segment. Residues 126–148 (LQRYLVFLHKGNFFSVRRRVPCG) are Cytoplasmic-facing. Residues 149–169 (IVTSAVAWVTAILATVPEFAV) form a helical membrane-spanning segment. At 170–198 (YKPQMEDPKYKCAFSRTPFLPADETFWKH) the chain is on the extracellular side. The chain crosses the membrane as a helical span at residues 199–219 (FLTLKMNVSVLVFPLFIFTFL). The Cytoplasmic segment spans residues 220-238 (YVQMRKTLRFGEQRYSLFK). The helical transmembrane segment at 239–259 (LVFAIMVVFLLMWAPYNIALF) threads the bilayer. Residues 260-281 (LSTFKEHFSLSDCKSNYNLDKS) lie on the Extracellular side of the membrane. Residues 282-302 (VLITKLIATTHCCVNPLLYVF) traverse the membrane as a helical segment. At 303-344 (LDGTFRKYLCRFFHRRSNTPRQPRRRFAQGTSREEPDRSTEV) the chain is on the cytoplasmic side. Positions 323-344 (RQPRRRFAQGTSREEPDRSTEV) are disordered. The segment covering 334-344 (SREEPDRSTEV) has biased composition (basic and acidic residues).

Belongs to the G-protein coupled receptor 1 family.

It localises to the cell membrane. Receptor for CCL19 and chemerin/RARRES2. Does not appear to be a signaling receptor, but may have a role in modulating chemokine-triggered immune responses by capturing and internalizing CCL19 or by presenting RARRES2 ligand to CMKLR1, a functional signaling receptor. Plays a critical role for the development of Th2 responses. This chain is C-C chemokine receptor-like 2 (CCRL2), found in Macaca mulatta (Rhesus macaque).